A 166-amino-acid chain; its full sequence is Protein FAM163B (166 aa).

A helical transmembrane segment spans residues 6–26 (VVITGGILATVILLCIIAVLC). Ser-40 carries the post-translational modification Phosphoserine.

It belongs to the FAM163 family.

It localises to the membrane. This is Protein FAM163B (FAM163B) from Homo sapiens (Human).